The primary structure comprises 355 residues: Anthocyanin synthase (355 aa).

Y145 and K216 together coordinate substrate. One can recognise a Fe2OG dioxygenase domain in the interval L211 to P310. Residue N218–Y220 coordinates 2-oxoglutarate. H235 provides a ligand contact to Fe cation. Position 236 (T236) interacts with substrate. Residues D237 and H291 each contribute to the Fe cation site. 2-oxoglutarate contacts are provided by residues R301 and R301–S303. Positions 309 and 344 each coordinate substrate.

This sequence belongs to the iron/ascorbate-dependent oxidoreductase family. Requires L-ascorbate as cofactor. The cofactor is Fe(2+). Expressed in stems and leaves. Expressed at low levels in ovaries.

It catalyses the reaction a (2R,3S,4S)-leucoanthocyanidin + 2-oxoglutarate + O2 = a 4-H-anthocyanidin with a 3-hydroxy group + succinate + CO2 + 2 H2O. The protein operates within pigment biosynthesis; anthocyanin biosynthesis. Functionally, involved in anthocyanin biosynthesis by catalyzing the oxidation of leucoanthocyanidins into anthocyanidins. Required for the accumulation of anthocyanin in red-fleshed kiwifruit varieties. This chain is Anthocyanin synthase, found in Actinidia chinensis var. chinensis (Chinese soft-hair kiwi).